Consider the following 179-residue polypeptide: Bifunctional protein PyrR (179 aa).

The PRPP-binding signature appears at 99–111 (VILVDDVLYTGRT).

The protein belongs to the purine/pyrimidine phosphoribosyltransferase family. PyrR subfamily. Homodimer and homohexamer; in equilibrium.

It carries out the reaction UMP + diphosphate = 5-phospho-alpha-D-ribose 1-diphosphate + uracil. In terms of biological role, regulates transcriptional attenuation of the pyrimidine nucleotide (pyr) operon by binding in a uridine-dependent manner to specific sites on pyr mRNA. This disrupts an antiterminator hairpin in the RNA and favors formation of a downstream transcription terminator, leading to a reduced expression of downstream genes. Its function is as follows. Also displays a weak uracil phosphoribosyltransferase activity which is not physiologically significant. The polypeptide is Bifunctional protein PyrR (Limosilactobacillus fermentum (strain NBRC 3956 / LMG 18251) (Lactobacillus fermentum)).